We begin with the raw amino-acid sequence, 173 residues long: ESALERRSSSVVMNNVMKKPDLSDPKLRAKLAKGMGRNYYGEPAWPNDLLYMFPVCILGTFAAIVGLAVMQPTPTGEPANPFATPLEILPEWYFFPTFNLLRVIPNKLLGVLSMAAVPAGLITVPFIENVNKFQNPFRRPVATSVFLLGTVVAIWLGIGATLPIDKAISLGFW.

Residues 1–14 (ESALERRSSSVVMN) constitute a chloroplast transit peptide. 3 helical membrane-spanning segments follow: residues 49-69 (LLYMFPVCILGTFAAIVGLAV), 108-128 (LLGVLSMAAVPAGLITVPFIE), and 144-164 (SVFLLGTVVAIWLGIGATLPI).

Belongs to the cytochrome b family. PetD subfamily. As to quaternary structure, the 4 large subunits of the cytochrome b6-f complex are cytochrome b6, subunit IV (17 kDa polypeptide, petD), cytochrome f and the Rieske protein, while the 4 small subunits are petG, petL, petM and petN. The complex functions as a dimer.

Its subcellular location is the plastid. It localises to the chloroplast thylakoid membrane. Component of the cytochrome b6-f complex, which mediates electron transfer between photosystem II (PSII) and photosystem I (PSI), cyclic electron flow around PSI, and state transitions. The polypeptide is Cytochrome b6-f complex subunit 4, chloroplastic (Euglena gracilis).